We begin with the raw amino-acid sequence, 501 residues long: Glutamate--tRNA ligase (501 aa).

The short motif at 21–31 is the 'HIGH' region element; the sequence is PSPTGTPHVGL. Residues 266–270 carry the 'KMSKS' region motif; that stretch reads KLSKR. An ATP-binding site is contributed by Lys-269.

This sequence belongs to the class-I aminoacyl-tRNA synthetase family. Glutamate--tRNA ligase type 1 subfamily. As to quaternary structure, monomer.

The protein localises to the cytoplasm. The catalysed reaction is tRNA(Glu) + L-glutamate + ATP = L-glutamyl-tRNA(Glu) + AMP + diphosphate. Functionally, catalyzes the attachment of glutamate to tRNA(Glu) in a two-step reaction: glutamate is first activated by ATP to form Glu-AMP and then transferred to the acceptor end of tRNA(Glu). The polypeptide is Glutamate--tRNA ligase (Kineococcus radiotolerans (strain ATCC BAA-149 / DSM 14245 / SRS30216)).